We begin with the raw amino-acid sequence, 301 residues long: Polyamine aminopropyltransferase (301 aa).

The PABS domain occupies 4-240; that stretch reads WHWLLEWQTP…GLWGFVYGGV (237 aa). Position 33 (Gln-33) interacts with S-methyl-5'-thioadenosine. His-64 and Glu-89 together coordinate spermidine. S-methyl-5'-thioadenosine is bound by residues Asp-109 and 141–142; that span reads DG. Asp-159 (proton acceptor) is an active-site residue.

This sequence belongs to the spermidine/spermine synthase family. As to quaternary structure, homotrimer.

It localises to the cytoplasm. It catalyses the reaction S-adenosyl 3-(methylsulfanyl)propylamine + putrescine = S-methyl-5'-thioadenosine + spermidine + H(+). The enzyme catalyses S-adenosyl 3-(methylsulfanyl)propylamine + propane-1,3-diamine = norspermidine + S-methyl-5'-thioadenosine + H(+). It carries out the reaction norspermidine + S-adenosyl 3-(methylsulfanyl)propylamine = norspermine + S-methyl-5'-thioadenosine + H(+). The catalysed reaction is S-adenosyl 3-(methylsulfanyl)propylamine + spermidine = thermospermine + S-methyl-5'-thioadenosine + H(+). It functions in the pathway amine and polyamine biosynthesis; spermidine biosynthesis; spermidine from putrescine: step 1/1. With respect to regulation, competitively inhibited by 5-methylthioadenosine, 5-methylthiotubercidin, S-adenosyl(5)-3-thiopropylamine and S-adenosyl-3-thio-l,8-diaminooctane. Functionally, involved in the biosynthesis of polyamines which are thought to support the growth of thermophilic microorganisms under high-temperature conditions. It seems that long-chain and branched-chain of polyamines effectively stabilize DNA and RNA, respectively. Catalyzes the irreversible transfer of a propylamine group from the amino donor S-adenosylmethioninamine (decarboxy-AdoMet) to various amine acceptors such as putrescine (1,4-diaminobutane), 1,3-diaminopropane, sym-norspermidine and spermidine. The biosynthesis of caldopentamine from norspermine has been also observed, but with a very low activity. The reaction involves a nucleophilic attack on the C-3 methylene of the propylamine moiety adjacent to the positively charged sulfur of decarboxy-AdoMet. S-adenosylmethioninamine is the only amino donor. The polypeptide is Polyamine aminopropyltransferase (Saccharolobus solfataricus (strain ATCC 35092 / DSM 1617 / JCM 11322 / P2) (Sulfolobus solfataricus)).